The following is a 27-amino-acid chain: Pregnancy-associated glycoprotein 59 (27 aa).

It belongs to the peptidase A1 family. Post-translationally, glycosylated. In terms of tissue distribution, placenta.

The polypeptide is Pregnancy-associated glycoprotein 59 (PAG59) (Capra hircus (Goat)).